A 557-amino-acid chain; its full sequence is MSDIEIAQRAKMLPIIDLAREKLGIPAASLDPYGHYKAKVALDYIDGLKDRPDGKLILVTAISPTPAGEGKTTTTVGLGDALNRIGKKTVMCLREPSLGPCFGVKGGAAGGGHAQVVPMEDINLHFTGDFHAVGVAHNLLSALIDNHINHGNALDIDPRRIQWKRVVDMNDRALRKIVVGMGGTANGYLREDGFDIVVASEVMAILCLATSMADLKERLGRIIVGYKSDGKTPVYARDLKAHGAMAALLKDAIKPNLVQTLENNLAIIHGGPFANIAHGCNTVTATQTALKLADYVVTEAGFGADLGAEKFIDIKCRMAGLNPAAVVLVATVRALKFHGGVKKEDLNQENLAALEAGFANLERHVHNIREHYGLPCVVSINHFSFDTEAEIAWLMKKCEALGVKAVLARHWAEGGKGAEALARTVADIVDHQPGRHTFVYGDEATLWNKIETIATKIYGAAGISADAKVKAQLEAWNADYGHYPVCMAKTQMSFSTDPNAKGAPSGHTVAIREVRLANGAGFVVAIAGDMMTMPGLPKVPAAEHIDVDDDGRISGLF.

65 to 72 (TPAGEGKT) serves as a coordination point for ATP.

This sequence belongs to the formate--tetrahydrofolate ligase family.

It carries out the reaction (6S)-5,6,7,8-tetrahydrofolate + formate + ATP = (6R)-10-formyltetrahydrofolate + ADP + phosphate. The protein operates within one-carbon metabolism; tetrahydrofolate interconversion. The chain is Formate--tetrahydrofolate ligase from Methylococcus capsulatus (strain ATCC 33009 / NCIMB 11132 / Bath).